A 113-amino-acid chain; its full sequence is Putative pterin-4-alpha-carbinolamine dehydratase (113 aa).

It belongs to the pterin-4-alpha-carbinolamine dehydratase family.

The enzyme catalyses (4aS,6R)-4a-hydroxy-L-erythro-5,6,7,8-tetrahydrobiopterin = (6R)-L-erythro-6,7-dihydrobiopterin + H2O. The sequence is that of Putative pterin-4-alpha-carbinolamine dehydratase from Saccharophagus degradans (strain 2-40 / ATCC 43961 / DSM 17024).